The primary structure comprises 304 residues: Cell division protein ZipA (304 aa).

Over 1 to 5 (MQDLR) the chain is Periplasmic. The helical transmembrane segment at 6-26 (LILIVVGAIAIIALLLHGLWT) threads the bilayer. The Cytoplasmic portion of the chain corresponds to 27–304 (SRKERSSVFR…IRDVIDANSH (278 aa)). The disordered stretch occupies residues 31 to 165 (RSSVFRDRPH…PEPQSQPKQK (135 aa)). Over residues 121–132 (ARPETHKPDQPE) the composition is skewed to basic and acidic residues. The span at 137–158 (AAPAAAETAPAPAEPAQKTPEP) shows a compositional bias: low complexity.

Belongs to the ZipA family. As to quaternary structure, interacts with FtsZ via their C-terminal domains.

Its subcellular location is the cell inner membrane. Functionally, essential cell division protein that stabilizes the FtsZ protofilaments by cross-linking them and that serves as a cytoplasmic membrane anchor for the Z ring. Also required for the recruitment to the septal ring of downstream cell division proteins. The polypeptide is Cell division protein ZipA (Erwinia tasmaniensis (strain DSM 17950 / CFBP 7177 / CIP 109463 / NCPPB 4357 / Et1/99)).